Consider the following 366-residue polypeptide: Chalcone synthase B (366 aa).

Cysteine 172 is a catalytic residue.

The protein belongs to the thiolase-like superfamily. Chalcone/stilbene synthases family.

It catalyses the reaction (E)-4-coumaroyl-CoA + 3 malonyl-CoA + 3 H(+) = 2',4,4',6'-tetrahydroxychalcone + 3 CO2 + 4 CoA. Its pathway is secondary metabolite biosynthesis; flavonoid biosynthesis. Its function is as follows. The primary product of this enzyme is 4,2',4',6'-tetrahydroxychalcone (also termed naringenin-chalcone or chalcone) which can under specific conditions spontaneously isomerize into naringenin. The chain is Chalcone synthase B (CHSB) from Ipomoea trifida (Morning glory).